The sequence spans 446 residues: MTDEESRALYDRALSVMPGGVNSSVRATQPYPFFIERGDGATVIDADGTRYLDYVMGYGPLLYGHDLPEPVNAAIQSYTSEGPMYGAPTPIEVEHAEFVARHVPSVEMIRFVNSGTEATVSAVRLARGYTGRDKIVVMKGGYHGAQESTLVEGDPMHVEPSTPGIPSSFAKHTLPVPFNDLEAITTVFETHGEDIAAVLTEPILANNGIVRPVDGYLEHLRSLTTEHNSLLIFDEVITGFRVGGLGCAQSKFGVTPDVTTFGKIIGGGFPVGAIGGRADIIEHFTPSGDVFQSGTFSGHPVTMAAGYESLKYAAENDVYDHVNRLGERLRGGITDIATDQSPSAIVVGLDSMFKTVFEREGSTTDDGDVCSAGCEQRESCMRYDDCPKTGADVSSAETERWERIFWQEMRDHNIFLTANQFESQFVSYAHTDEDIDRTLEAYKSAL.

Lys-263 bears the N6-(pyridoxal phosphate)lysine mark.

It belongs to the class-III pyridoxal-phosphate-dependent aminotransferase family. HemL subfamily. Pyridoxal 5'-phosphate serves as cofactor.

Its subcellular location is the cytoplasm. The enzyme catalyses (S)-4-amino-5-oxopentanoate = 5-aminolevulinate. Its pathway is porphyrin-containing compound metabolism; protoporphyrin-IX biosynthesis; 5-aminolevulinate from L-glutamyl-tRNA(Glu): step 2/2. In Haloquadratum walsbyi (strain DSM 16790 / HBSQ001), this protein is Glutamate-1-semialdehyde 2,1-aminomutase.